The primary structure comprises 508 residues: Prenylcysteine oxidase 1 (508 aa).

The first 31 residues, 1–31, serve as a signal peptide directing secretion; sequence MDPAAPGLACSILRLGLGLLLLCSWWYPGSA. 3 N-linked (GlcNAc...) asparagine glycosylation sites follow: asparagine 199, asparagine 291, and asparagine 356.

Belongs to the prenylcysteine oxidase family. The cofactor is FAD.

The protein resides in the lysosome. The catalysed reaction is an S-polyprenyl-L-cysteine + O2 + H2O = a polyprenal + L-cysteine + H2O2. The enzyme catalyses S-(2E,6E)-farnesyl-L-cysteine + O2 + H2O = (2E,6E)-farnesal + L-cysteine + H2O2. It catalyses the reaction [(2E,6E,10E)-geranylgeranyl]-L-cysteine + O2 + H2O = (2E,6E,10E)-geranylgeranial + L-cysteine + H2O2. In terms of biological role, prenylcysteine oxidase that cleaves the thioether bond of prenyl-L-cysteines, such as farnesylcysteine and geranylgeranylcysteine. Only active against free prenylcysteines and not prenylcysteine residues within prenylated proteins or peptides. Involved in the final step in the degradation of prenylated proteins, by degrading prenylcysteines after the protein has been degraded. In Bos taurus (Bovine), this protein is Prenylcysteine oxidase 1.